The sequence spans 317 residues: UDP-3-O-acylglucosamine N-acyltransferase (317 aa).

The active-site Proton acceptor is H229.

This sequence belongs to the transferase hexapeptide repeat family. LpxD subfamily. Homotrimer.

The enzyme catalyses a UDP-3-O-[(3R)-3-hydroxyacyl]-alpha-D-glucosamine + a (3R)-hydroxyacyl-[ACP] = a UDP-2-N,3-O-bis[(3R)-3-hydroxyacyl]-alpha-D-glucosamine + holo-[ACP] + H(+). Its pathway is bacterial outer membrane biogenesis; LPS lipid A biosynthesis. Its function is as follows. Catalyzes the N-acylation of UDP-3-O-acylglucosamine using 3-hydroxyacyl-ACP as the acyl donor. Is involved in the biosynthesis of lipid A, a phosphorylated glycolipid that anchors the lipopolysaccharide to the outer membrane of the cell. The sequence is that of UDP-3-O-acylglucosamine N-acyltransferase from Campylobacter concisus (strain 13826).